The sequence spans 152 residues: MARMHARRRGIASSVRPYRKEVPAWSNSDVKEIEGKIVELRKAGLTCAQIGLVLRDKHGVPNVKLATGKRINAIVRENDLDTDIPEDLRNLMHKALMMRKHLEQNRKDLHNKRQLQLTEAKVRRLVKYYVGTKRLPLGWVYKPETAEILLSR.

This sequence belongs to the universal ribosomal protein uS15 family. In terms of assembly, part of the 30S ribosomal subunit.

In Methanocorpusculum labreanum (strain ATCC 43576 / DSM 4855 / Z), this protein is Small ribosomal subunit protein uS15.